The primary structure comprises 286 residues: tRNA (guanine-N(7)-)-methyltransferase (286 aa).

Residues Gly-91, 114–115 (EI), 158–159 (NS), and Leu-178 each bind S-adenosyl-L-methionine. Asp-181 is a catalytic residue. 256–258 (TEE) is a binding site for S-adenosyl-L-methionine.

Belongs to the class I-like SAM-binding methyltransferase superfamily. TrmB family. In terms of assembly, forms a complex with TRM82.

The protein resides in the nucleus. It carries out the reaction guanosine(46) in tRNA + S-adenosyl-L-methionine = N(7)-methylguanosine(46) in tRNA + S-adenosyl-L-homocysteine. Its pathway is tRNA modification; N(7)-methylguanine-tRNA biosynthesis. In terms of biological role, catalyzes the formation of N(7)-methylguanine at position 46 (m7G46) in tRNA. This Cryptococcus neoformans var. neoformans serotype D (strain B-3501A) (Filobasidiella neoformans) protein is tRNA (guanine-N(7)-)-methyltransferase.